We begin with the raw amino-acid sequence, 412 residues long: Branched-chain alpha-ketoacid dehydrogenase kinase (412 aa).

Residues 1–30 (MILTSVLGSGPRSGSSLWPLLGSSLSLRVR) constitute a mitochondrion transit peptide. At Ser-31 the chain carries Phosphoserine. One can recognise a Histidine kinase domain in the interval 159–404 (LDDHKDVVTL…DVYLRLRHID (246 aa)). An N6-acetyllysine mark is found at Lys-192 and Lys-233. Asn-279 and Asp-315 together coordinate ATP. Asn-279 serves as a coordination point for Mg(2+). K(+) contacts are provided by Val-328, Asp-330, and Phe-333. ATP is bound by residues Thr-334 and Thr-335. A phosphoserine mark is found at Ser-356 and Ser-360. ATP is bound by residues His-364, Gly-367, and Leu-370. Residue Gly-367 coordinates K(+).

This sequence belongs to the PDK/BCKDK protein kinase family. Homodimer. Homotetramer. Dimerizes through interaction of two opposing nucleotide-binding domains. Interacts with E2 component of the branched-chain alpha-ketoacid dehydrogenase (BCKDH) complex. Competes with BCKDK for binding to the E2 component; this interaction is modulated by branched-chain alpha-keto acids. At steady state, BCKDH holoenzyme contains BCKDK and BCKDHA is phosphorylated. In response to high levels of branched-chain alpha-keto acids, the inhibitory BCKDK is replaced by activating PPM1K leading to BCKDHA dephosphorylation and BCAA degradation. Post-translationally, autophosphorylated. Expressed in heart and liver.

It localises to the mitochondrion matrix. The protein localises to the mitochondrion. The enzyme catalyses L-seryl-[3-methyl-2-oxobutanoate dehydrogenase] + ATP = O-phospho-L-seryl-[3-methyl-2-oxobutanoate dehydrogenase] + ADP + H(+). It catalyses the reaction L-seryl-[protein] + ATP = O-phospho-L-seryl-[protein] + ADP + H(+). The ATP-ase activity is up-regulated by potassium and rubidium ions but not by sodium ions. Up-regulated in the presence of apo- or lipoylated-DBT/E2b subunit of the BCKDH complex. Its function is as follows. Serine/threonine-protein kinase component of macronutrients metabolism. Forms a functional kinase and phosphatase pair with PPM1K, serving as a metabolic regulatory node that coordinates branched-chain amino acids (BCAAs) with glucose and lipid metabolism via two distinct phosphoprotein targets: mitochondrial BCKDHA subunit of the branched-chain alpha-ketoacid dehydrogenase (BCKDH) complex and cytosolic ACLY, a lipogenic enzyme of Krebs cycle. Phosphorylates and inactivates mitochondrial BCKDH complex a multisubunit complex consisting of three multimeric components each involved in different steps of BCAA catabolism: E1 composed of BCKDHA and BCKDHB, E2 core composed of DBT monomers, and E3 composed of DLD monomers. Associates with the E2 component of BCKDH complex and phosphorylates BCKDHA on Ser-333, leading to conformational changes that interrupt substrate channeling between E1 and E2 and inactivates the BCKDH complex. phosphorylates ACLY on Ser-455 in response to changes in cellular carbohydrate abundance such as occurs during fasting to feeding metabolic transition. Refeeding stimulates MLXIPL/ChREBP transcription factor, leading to increased BCKDK to PPM1K expression ratio, phosphorylation and activation of ACLY that ultimately results in the generation of malonyl-CoA and oxaloacetate immediate substrates of de novo lipogenesis and glucogenesis, respectively. Recognizes phosphosites having SxxE/D canonical motif. The polypeptide is Branched-chain alpha-ketoacid dehydrogenase kinase (Bckdk) (Rattus norvegicus (Rat)).